Consider the following 233-residue polypeptide: Orotidine 5'-phosphate decarboxylase (233 aa).

Substrate contacts are provided by residues Asp-11, Lys-34, 61–70 (DLKLHDIPNT), Thr-117, Arg-179, Gln-189, Gly-209, and Arg-210. Lys-63 serves as the catalytic Proton donor.

The protein belongs to the OMP decarboxylase family. Type 1 subfamily. Homodimer.

It catalyses the reaction orotidine 5'-phosphate + H(+) = UMP + CO2. The protein operates within pyrimidine metabolism; UMP biosynthesis via de novo pathway; UMP from orotate: step 2/2. Catalyzes the decarboxylation of orotidine 5'-monophosphate (OMP) to uridine 5'-monophosphate (UMP). The sequence is that of Orotidine 5'-phosphate decarboxylase from Streptococcus agalactiae serotype III (strain NEM316).